Reading from the N-terminus, the 461-residue chain is UDP-glucose 6-dehydrogenase TuaD (461 aa).

NAD(+) contacts are provided by residues 3 to 20 (KIAV…GTCF), valine 12, aspartate 31, lysine 36, threonine 122, and glutamate 156. Substrate is bound by residues 152-156 (EFLRE), lysine 205, asparagine 209, 250-254 (FLKAG), and glycine 258. Catalysis depends on cysteine 261, which acts as the Nucleophile. Lysine 264 is an NAD(+) binding site. Lysine 321 lines the substrate pocket. Arginine 328 is a binding site for NAD(+).

Belongs to the UDP-glucose/GDP-mannose dehydrogenase family. In terms of processing, phosphorylated by YwqD and dephosphorylated by YwqE in vitro.

The protein resides in the cytoplasm. The catalysed reaction is UDP-alpha-D-glucose + 2 NAD(+) + H2O = UDP-alpha-D-glucuronate + 2 NADH + 3 H(+). Its pathway is nucleotide-sugar biosynthesis; UDP-alpha-D-glucuronate biosynthesis; UDP-alpha-D-glucuronate from UDP-alpha-D-glucose: step 1/1. Its activity is regulated as follows. Activated by phosphorylation; inhibited by dephosphorylation. Functionally, catalyzes the conversion of UDP-glucose into UDP-glucuronate, one of the precursors of teichuronic acid. This is UDP-glucose 6-dehydrogenase TuaD (tuaD) from Bacillus subtilis (strain 168).